A 348-amino-acid chain; its full sequence is Dihydroorotase (348 aa).

2 residues coordinate Zn(2+): His-17 and His-19. Substrate-binding positions include 19 to 21 (HLR) and Asn-45. Zn(2+)-binding residues include Lys-103, His-140, and His-178. Lys-103 carries the N6-carboxylysine modification. Residue His-140 coordinates substrate. A substrate-binding site is contributed by Leu-223. Zn(2+) is bound at residue Asp-251. Asp-251 is an active-site residue. 2 residues coordinate substrate: His-255 and Ala-267.

This sequence belongs to the metallo-dependent hydrolases superfamily. DHOase family. Class II DHOase subfamily. Homodimer. It depends on Zn(2+) as a cofactor.

The catalysed reaction is (S)-dihydroorotate + H2O = N-carbamoyl-L-aspartate + H(+). It participates in pyrimidine metabolism; UMP biosynthesis via de novo pathway; (S)-dihydroorotate from bicarbonate: step 3/3. Functionally, catalyzes the reversible cyclization of carbamoyl aspartate to dihydroorotate. This chain is Dihydroorotase, found in Salmonella agona (strain SL483).